Consider the following 104-residue polypeptide: Large ribosomal subunit protein eL42 (104 aa).

This sequence belongs to the eukaryotic ribosomal protein eL42 family. In terms of assembly, component of the large ribosomal subunit. Mature ribosomes consist of a small (40S) and a large (60S) subunit. The 40S subunit contains about 32 different proteins and 1 molecule of RNA (18S). The 60S subunit contains about 42 different proteins and 3 molecules of RNA (28S, 5.8S and 5S).

It is found in the cytoplasm. In terms of biological role, component of the ribosome, a large ribonucleoprotein complex responsible for the synthesis of proteins in the cell. The small ribosomal subunit (SSU) binds messenger RNAs (mRNAs) and translates the encoded message by selecting cognate aminoacyl-transfer RNA (tRNA) molecules. The large subunit (LSU) contains the ribosomal catalytic site termed the peptidyl transferase center (PTC), which catalyzes the formation of peptide bonds, thereby polymerizing the amino acids delivered by tRNAs into a polypeptide chain. The nascent polypeptides leave the ribosome through a tunnel in the LSU and interact with protein factors that function in enzymatic processing, targeting, and the membrane insertion of nascent chains at the exit of the ribosomal tunnel. In Plasmodium falciparum (isolate 3D7), this protein is Large ribosomal subunit protein eL42.